The following is a 217-amino-acid chain: Oxygen-insensitive NAD(P)H nitroreductase (217 aa).

10-14 (RHSTK) lines the FMN pocket. 6 residues coordinate NAD(+): lysine 14, threonine 41, threonine 67, asparagine 71, lysine 74, and arginine 107. Residue asparagine 71 participates in FMN binding. Residues 165-166 (EG) and 205-207 (KSR) each bind FMN.

This sequence belongs to the nitroreductase family. Homodimer. Requires FMN as cofactor.

Its function is as follows. Reduction of a variety of nitroaromatic compounds using NADH (and to lesser extent NADPH) as source of reducing equivalents; two electrons are transferred. In Enterobacter cloacae, this protein is Oxygen-insensitive NAD(P)H nitroreductase.